A 103-amino-acid polypeptide reads, in one-letter code: Small ribosomal subunit protein uS10 (103 aa).

This sequence belongs to the universal ribosomal protein uS10 family. Part of the 30S ribosomal subunit.

Its function is as follows. Involved in the binding of tRNA to the ribosomes. The sequence is that of Small ribosomal subunit protein uS10 from Stenotrophomonas maltophilia (strain R551-3).